The primary structure comprises 320 residues: L-lactate dehydrogenase 2 (320 aa).

Residues 18-19 (AV), aspartate 40, and arginine 45 each bind NAD(+). Substrate-binding positions include glutamine 88, arginine 94, and 126-129 (NPVD). Residues 124 to 126 (ITN) and serine 149 contribute to the NAD(+) site. 154–157 (DSAR) contacts substrate. Residues arginine 159 and 171–176 (KNVHAY) contribute to the beta-D-fructose 1,6-bisphosphate site. Histidine 181 functions as the Proton acceptor in the catalytic mechanism. A Phosphotyrosine modification is found at tyrosine 228. Threonine 237 contacts substrate.

This sequence belongs to the LDH/MDH superfamily. LDH family. Homotetramer.

The protein resides in the cytoplasm. The enzyme catalyses (S)-lactate + NAD(+) = pyruvate + NADH + H(+). Its pathway is fermentation; pyruvate fermentation to lactate; (S)-lactate from pyruvate: step 1/1. With respect to regulation, allosterically activated by fructose 1,6-bisphosphate (FBP). Functionally, catalyzes the conversion of lactate to pyruvate. This chain is L-lactate dehydrogenase 2, found in Bifidobacterium longum subsp. longum (strain ATCC 15707 / DSM 20219 / JCM 1217 / NCTC 11818 / E194b).